We begin with the raw amino-acid sequence, 553 residues long: Arginine--tRNA ligase (553 aa).

Residues 132-140 carry the 'HIGH' region motif; sequence PTGDLHIGH.

Belongs to the class-I aminoacyl-tRNA synthetase family. In terms of assembly, monomer.

The protein resides in the cytoplasm. The enzyme catalyses tRNA(Arg) + L-arginine + ATP = L-arginyl-tRNA(Arg) + AMP + diphosphate. The polypeptide is Arginine--tRNA ligase (Staphylococcus aureus (strain Mu50 / ATCC 700699)).